The following is a 131-amino-acid chain: C-C motif chemokine 21 (131 aa).

Residues 1-23 (MAQSLALSLLILVLAFGIPGTQG) form the signal peptide. Intrachain disulfides connect Cys31–Cys57, Cys32–Cys75, and Cys103–Cys119. Residues 89-131 (HLDKTPTPRKPVQGCRKDRGVPKNGKKGKGCKRTEQSQTPKGP) form a disordered region.

It belongs to the intercrine beta (chemokine CC) family. Monomer. Binds to CCR7. Interacts with PDPN; relocalizes PDPN to the basolateral membrane. Interacts with TNFAIP6 (via Link domain). Interacts with GPR174.

Its subcellular location is the secreted. Its function is as follows. Inhibits hemopoiesis and stimulates chemotaxis. Chemotactic in vitro for thymocytes and activated T-cells, but not for B-cells, macrophages, or neutrophils. Shows preferential activity towards naive T-cells. May play a role in mediating homing of lymphocytes to secondary lymphoid organs. Binds to atypical chemokine receptor ACKR4 and mediates the recruitment of beta-arrestin (ARRB1/2) to ACKR4. This Macaca mulatta (Rhesus macaque) protein is C-C motif chemokine 21 (CCL21).